We begin with the raw amino-acid sequence, 140 residues long: Nucleoside diphosphate kinase (140 aa).

6 residues coordinate ATP: Lys-11, Phe-59, Arg-87, Thr-93, Arg-104, and Asn-114. The Pros-phosphohistidine intermediate role is filled by His-117.

It belongs to the NDK family. In terms of assembly, homotetramer. Mg(2+) serves as cofactor.

Its subcellular location is the cytoplasm. The enzyme catalyses a 2'-deoxyribonucleoside 5'-diphosphate + ATP = a 2'-deoxyribonucleoside 5'-triphosphate + ADP. The catalysed reaction is a ribonucleoside 5'-diphosphate + ATP = a ribonucleoside 5'-triphosphate + ADP. In terms of biological role, major role in the synthesis of nucleoside triphosphates other than ATP. The ATP gamma phosphate is transferred to the NDP beta phosphate via a ping-pong mechanism, using a phosphorylated active-site intermediate. The chain is Nucleoside diphosphate kinase from Rhizobium meliloti (strain 1021) (Ensifer meliloti).